A 419-amino-acid polypeptide reads, in one-letter code: MGKLIIEGPARLNGAVKISGSKNAALPIIAASLICDRGVLLENVPDLMDVRTMIDILNSAGCKTRFAENVLSVNPPEKPNTDIPYELVRKMRASFNVLGPLAAKYGKASVSLPGGCSIGVRPVDYHIEGLQKLGFSINIEHGIVTAELGERPQEVLISLPFPSVGATEHIMTTAAILDGTHTILENAAMEPEIEDLANFLNDMGCKVFGAGTRRIEIFGVEKTRECTHRIIPDRIEAGTYAIAVAATMGDAVIENLQVSHLVALFDVLRSAGVEIQQIDETAIRIKMNQRPQPVKVQITPYPGYPTDLQPQIITFLSIATGTSTVSETVFKSRFQHVDELRRLGAKIEVNDGTAIIYGVENLSGAQVNATDLRAAAALVIAGLMASGTTSINEVDQIFRGYENIVEKLSRLSAVVEYFE.

22–23 (KN) is a phosphoenolpyruvate binding site. Arg92 lines the UDP-N-acetyl-alpha-D-glucosamine pocket. Cys116 (proton donor) is an active-site residue. Cys116 carries the 2-(S-cysteinyl)pyruvic acid O-phosphothioketal modification. Residues Asp307 and Val329 each contribute to the UDP-N-acetyl-alpha-D-glucosamine site.

Belongs to the EPSP synthase family. MurA subfamily.

The protein localises to the cytoplasm. The enzyme catalyses phosphoenolpyruvate + UDP-N-acetyl-alpha-D-glucosamine = UDP-N-acetyl-3-O-(1-carboxyvinyl)-alpha-D-glucosamine + phosphate. Its pathway is cell wall biogenesis; peptidoglycan biosynthesis. Functionally, cell wall formation. Adds enolpyruvyl to UDP-N-acetylglucosamine. The polypeptide is UDP-N-acetylglucosamine 1-carboxyvinyltransferase (Pseudothermotoga lettingae (strain ATCC BAA-301 / DSM 14385 / NBRC 107922 / TMO) (Thermotoga lettingae)).